The following is a 273-amino-acid chain: Rhamnulose-1-phosphate aldolase (273 aa).

Glu-117 is an active-site residue. His-140, His-142, and His-211 together coordinate Zn(2+).

It belongs to the aldolase class II family. RhaD subfamily. Zn(2+) is required as a cofactor.

It is found in the cytoplasm. It catalyses the reaction L-rhamnulose 1-phosphate = (S)-lactaldehyde + dihydroxyacetone phosphate. The protein operates within carbohydrate degradation; L-rhamnose degradation; glycerone phosphate from L-rhamnose: step 3/3. Its function is as follows. Catalyzes the reversible cleavage of L-rhamnulose-1-phosphate to dihydroxyacetone phosphate (DHAP) and L-lactaldehyde. This Listeria monocytogenes serotype 4a (strain HCC23) protein is Rhamnulose-1-phosphate aldolase.